A 484-amino-acid polypeptide reads, in one-letter code: MNATTEQEAIVKVLFTTTEQGLELPESKRLLLVPADIRRYGLSRVLNSESMLNTAAPIPFDFLVNGTFLRTTLEDYLKENGLPFEKTVTLQYVRSLVPPAYEASFEHDDWVSSVDLLSATSSAGKWSGSSFLQGQDRILSASYDGLLRIWNGSGQALATSSVVNRGPLCGLKSAKFMSSTKIAAAGLDRTVRIWDYTEADDHFSGQLKPTLELYGHRSIIESLGVDGSSRRILTACADGSIGLWTTSKKLAPEAPTALLPQTYATKRRKGSTTSANIIAQRGALSLIPVHSRPVSAAIFDPQNQHTAYSASQDHTLKVLDLTTSRVVSTITTSNALMSACYLSNKSAPLIAAGTSSRNVTLIDPRESAAATSVMTLRGHINVVSSVSASPDNEYSLVSGSHDGTCRIWDLRSVRPAAGKEETGLGSVGESVYLIERESLGDKKRPLAGEGVKVFDVQWDKTWGIVSGGEDKKVQINKGRNIISS.

A ubiquitin-like (UBL) domain region spans residues 11–94; it reads VKVLFTTTEQ…EKTVTLQYVR (84 aa). WD repeat units lie at residues 121-160, 166-204, 215-254, 289-329, 331-372, 378-418, and 448-484; these read SSAG…LATS, GPLC…DHFS, GHRS…APEA, VHSR…VVST, TTSN…AATS, GHIN…PAAG, and GEGV…IISS.

The protein belongs to the WD repeat WDR12/YTM1 family. Component of the NOP7 complex, composed of ERB1, NOP7 and YTM1. The complex is held together by ERB1, which interacts with NOP7 via its N-terminal domain and with YTM1 via a high-affinity interaction between the seven-bladed beta-propeller domains of the 2 proteins. The NOP7 complex associates with the 66S pre-ribosome. Interacts (via UBL domain) with MDN1 (via VWFA/MIDAS domain).

The protein localises to the nucleus. The protein resides in the nucleolus. Its subcellular location is the nucleoplasm. In terms of biological role, component of the NOP7 complex, which is required for maturation of the 25S and 5.8S ribosomal RNAs and formation of the 60S ribosome. The protein is Ribosome biogenesis protein YTM1 of Pyricularia oryzae (strain 70-15 / ATCC MYA-4617 / FGSC 8958) (Rice blast fungus).